Reading from the N-terminus, the 728-residue chain is Rho-related BTB domain-containing protein 2 (728 aa).

Residues 1–210 form a rho-like region; it reads MDSDMDYERP…DNAIRAALIS (210 aa). Residues 21-28, 84-88, and 140-143 contribute to the GTP site; these read GDNAVGKT, DTFGD, and CQLD. BTB domains are found at residues 266-333 and 500-567; these read ADVI…HHHH and SDVT…TSSP. Gly residues predominate over residues 304–313; sequence ELGGPSGSGG. The segment at 304–333 is disordered; the sequence is ELGGPSGSGGPRPEDHRSHPEQHHHHHHHH. The segment covering 315–324 has biased composition (basic and acidic residues); the sequence is RPEDHRSHPE. Residues 703-728 are disordered; that stretch reads FWNSPSSPSSSAAGSASPSSSSSAVV. Residues 706 to 728 are compositionally biased toward low complexity; sequence SPSSPSSSAAGSASPSSSSSAVV.

This sequence belongs to the small GTPase superfamily. Rho family. As to quaternary structure, interacts with HSP90AA1 and HSP90AB1. Forms a complex with CUL3 and RBX1. Interacts (via BTB 1 domain) with CUL3. Interacts with MSI2. Post-translationally, autoubiquitinated by RHOBTB2-CUL3-RBX1 ubiquitin ligase complex. In terms of tissue distribution, expressed in most tissues, with highest expression in brain.

Functionally, regulator of cell proliferation and apoptosis. It likely functions as a substrate-adapter that recruits key substrates, e.g. MSI2, to CUL3-based ubiquitin ligase complexes for degradation. Required for MSI2 ubiquitination and degradation. In Mus musculus (Mouse), this protein is Rho-related BTB domain-containing protein 2 (Rhobtb2).